The primary structure comprises 231 residues: Ribonuclease 3 (231 aa).

The RNase III domain occupies 8–135 (VGDLERRIGH…LMAALYQDGG (128 aa)). Glu-48 contacts Mg(2+). Active-site residues include Asp-52 and Glu-124. Glu-124 provides a ligand contact to Mg(2+). One can recognise a DRBM domain in the interval 161-230 (DPKTALQEWA…AKALLEREGA (70 aa)). Positions 210–231 (GKSRQEAEKAAAKALLEREGAG) are disordered. Residues 212–231 (SRQEAEKAAAKALLEREGAG) show a composition bias toward basic and acidic residues.

Belongs to the ribonuclease III family. As to quaternary structure, homodimer. Requires Mg(2+) as cofactor.

Its subcellular location is the cytoplasm. It catalyses the reaction Endonucleolytic cleavage to 5'-phosphomonoester.. In terms of biological role, digests double-stranded RNA. Involved in the processing of primary rRNA transcript to yield the immediate precursors to the large and small rRNAs (23S and 16S). Processes some mRNAs, and tRNAs when they are encoded in the rRNA operon. Processes pre-crRNA and tracrRNA of type II CRISPR loci if present in the organism. The protein is Ribonuclease 3 of Caulobacter vibrioides (strain ATCC 19089 / CIP 103742 / CB 15) (Caulobacter crescentus).